The following is a 275-amino-acid chain: Light-independent protochlorophyllide reductase iron-sulfur ATP-binding protein (275 aa).

ATP is bound by residues 12-17 (GIGKST) and Lys41. Ser16 serves as a coordination point for Mg(2+). Cys97 and Cys131 together coordinate [4Fe-4S] cluster. Position 182-183 (182-183 (NR)) interacts with ATP.

It belongs to the NifH/BchL/ChlL family. In terms of assembly, homodimer. Protochlorophyllide reductase is composed of three subunits; BchL, BchN and BchB. [4Fe-4S] cluster serves as cofactor.

It catalyses the reaction chlorophyllide a + oxidized 2[4Fe-4S]-[ferredoxin] + 2 ADP + 2 phosphate = protochlorophyllide a + reduced 2[4Fe-4S]-[ferredoxin] + 2 ATP + 2 H2O. It participates in porphyrin-containing compound metabolism; bacteriochlorophyll biosynthesis (light-independent). Its function is as follows. Component of the dark-operative protochlorophyllide reductase (DPOR) that uses Mg-ATP and reduced ferredoxin to reduce ring D of protochlorophyllide (Pchlide) to form chlorophyllide a (Chlide). This reaction is light-independent. The L component serves as a unique electron donor to the NB-component of the complex, and binds Mg-ATP. The protein is Light-independent protochlorophyllide reductase iron-sulfur ATP-binding protein of Chlorobium phaeobacteroides (strain DSM 266 / SMG 266 / 2430).